Here is a 294-residue protein sequence, read N- to C-terminus: Large ribosomal subunit protein uL18A (294 aa).

A Phosphoserine modification is found at S10. Position 12 is a phosphotyrosine (Y12). S81 is subject to Phosphoserine.

The protein belongs to the universal ribosomal protein uL18 family. As to quaternary structure, component of the large ribosomal subunit (LSU). Mature yeast ribosomes consist of a small (40S) and a large (60S) subunit. The 40S small subunit contains 1 molecule of ribosomal RNA (18S rRNA) and 33 different proteins (encoded by 57 genes). The large 60S subunit contains 3 rRNA molecules (25S, 5.8S and 5S rRNA) and 46 different proteins (encoded by 81 genes). Component of a hexameric 5S RNP precursor complex, composed of 5S RNA, rrs1, rpf2, rpl5a/rpl5b, rpl11a/rpl11b and syo1; this complex acts as a precursor for ribosome assembly. rpl5a/rpl5b/uL18 forms a heterotrimeric complex with syo1 and rpl11a/rpl11b/uL5. Interaction of this complex with KAP104 allows the nuclear import of the heterotrimer.

It localises to the cytoplasm. It is found in the nucleus. Its function is as follows. Component of the ribosome, a large ribonucleoprotein complex responsible for the synthesis of proteins in the cell. The small ribosomal subunit (SSU) binds messenger RNAs (mRNAs) and translates the encoded message by selecting cognate aminoacyl-transfer RNA (tRNA) molecules. The large subunit (LSU) contains the ribosomal catalytic site termed the peptidyl transferase center (PTC), which catalyzes the formation of peptide bonds, thereby polymerizing the amino acids delivered by tRNAs into a polypeptide chain. The nascent polypeptides leave the ribosome through a tunnel in the LSU and interact with protein factors that function in enzymatic processing, targeting, and the membrane insertion of nascent chains at the exit of the ribosomal tunnel. In Schizosaccharomyces pombe (strain 972 / ATCC 24843) (Fission yeast), this protein is Large ribosomal subunit protein uL18A (rpl501).